The chain runs to 1193 residues: MAAPYRQPEEAVDDSEFIDDHHDHLRDTVHHRLRANSAIMQFQKILVANRGEIPIRIFRTAHELSLQTVAIFSHEDRLSMHRQKADEAYMIGHRGQYTPVGAYLAADEIVKIALEHGVHLIHPGYGFLSENADFARKVEKAGMVFVGPTPDTIDSLGDKVSARQLAIRCNVPVVPGTEGPVERYEEVKAFTDTYGFPIIIKAAFGGGGRGMRVVRNQADLRDSFERATSEARSAFGNGTVFVERFLDKPKHIEVQLLGDNHGNVVHLFERDCSVQRRHQKVVEVAPAKDLPTDVRDRILSDAVKLAKSVNYRNAGTAEFLVDQQNRHYFIEINPRIQVEHTITEEITGIDIVAAQIQIAAGATLEQLGLTQDRISTRGFAIQCRITTEDPSKGFSPDTGKIEVYRSAGGNGVRLDGGNGFAGAIITPHYDSMLVKCTCRGSTYEIARRKVVRALVEFRIRGVKTNIPFLTSLLSHPTFVDGNCWTTFIDDTPELFALVGSQNRAQKLLAYLGDVAVNGSSIKGQMGEPKFKGEIIKPKLLDAQGKPLDVSQPCTKGWKQIIDQEGPVAFAKAVRANKGCLIMDTTWRDAHQSLLATRVRTIDLLNIAHETSHALSNAYSLECWGGATFDVAMRFLYEDPWDRLRKMRKAVPNIPFQMLLRGANGVAYSSLPDNAIYHFCKNAKKCGVDIFRVFDALNDIDQLEVGIKAVHAAEGVVEATVCYSGDMLNPKKKYNLEYYLALVDKIVALKPHVLGIKDMAGVLKPQAARLLVGSIRERYPDLPIHVHTHDSAGTGVASMIACAQAGADAVDAATDSMSGMTSQPSIGAILASLEGTEHDPGLNSAHVRALDSYWAQLRLLYSPFEANLTGPDPEVYEHEIPGGQLTNLIFQASQLGLGQQWAETKKAYEVANDLLGDIVKVTPTSKVVGDLAQFIVSNKLSAQDVVDRAAELDFPGSVLEFLEGLMGQPFGGFPEPLRSRALRNRRKLDKRPGLYLEPLDLAAIKNQIREQFGSATEYDVASYAMYPKVFEDYKKFVQKYGDLSVLPTRYFLAKPEIGEEFHVELEKGKVLILKLLAIGPLSEQTGQREVFYEVNGEVRQVSIDDKKASIDNTARPKADVGDSSQVGAPMSGVVVEIRVHDGLEVKKGDPLAVLSAMKMEMVISAPHSGKVSGLLVKEGDSVDGQDLVCKITKA.

The region spanning 41 to 493 (QFQKILVANR…WTTFIDDTPE (453 aa)) is the Biotin carboxylation domain. Residues Lys159, Glu243, and His278 each contribute to the ATP site. The ATP-grasp domain maps to 163-360 (RQLAIRCNVP…IVAAQIQIAA (198 aa)). The active site involves Arg335. Positions 579–847 (CLIMDTTWRD…DPGLNSAHVR (269 aa)) constitute a Pyruvate carboxyltransferase domain. Substrate is bound by residues 587-591 (RDAHQ) and Arg660. Residue Asp588 coordinates a divalent metal cation. Residues Lys756, His786, and His788 each contribute to the a divalent metal cation site. N6-carboxylysine is present on Lys756. Thr921 is a binding site for substrate. Residues 1116 to 1191 (KADVGDSSQV…DGQDLVCKIT (76 aa)) form the Biotinyl-binding domain. Lys1157 is modified (N6-biotinyllysine).

It depends on biotin as a cofactor. Requires Zn(2+) as cofactor.

The protein localises to the cytoplasm. The catalysed reaction is hydrogencarbonate + pyruvate + ATP = oxaloacetate + ADP + phosphate + H(+). It functions in the pathway carbohydrate biosynthesis; gluconeogenesis. Its function is as follows. Pyruvate carboxylase catalyzes a 2-step reaction, involving the ATP-dependent carboxylation of the covalently attached biotin in the first step and the transfer of the carboxyl group to pyruvate in the second. This Aspergillus terreus protein is Pyruvate carboxylase (pyc).